The chain runs to 184 residues: MSTPPLSGPGMGAAAGPGGFPGAQAATAAREVNTASLCRIGQETVQDIVFRTMEIFQLLRNMQLPNGVTYHTVTYQDRLGKLQEHLRQLSILFRKLRLVYDKCNENCAGLDPVPIEQLIPYVEEEYSKHDDRGIASQLRFASEEKREILEVNKKLKQKNQQLKQIMDQLRNLIWDINSMLAMRN.

Residues 136–179 (SQLRFASEEKREILEVNKKLKQKNQQLKQIMDQLRNLIWDINSM) are a coiled coil.

This sequence belongs to the Mediator complex subunit 30 family. Component of the Mediator complex.

The protein localises to the nucleus. In terms of biological role, component of the Mediator complex, a coactivator involved in the regulated transcription of nearly all RNA polymerase II-dependent genes. Mediator functions as a bridge to convey information from gene-specific regulatory proteins to the basal RNA polymerase II transcription machinery. Mediator is recruited to promoters by direct interactions with regulatory proteins and serves as a scaffold for the assembly of a functional preinitiation complex with RNA polymerase II and the general transcription factors. This Xenopus laevis (African clawed frog) protein is Mediator of RNA polymerase II transcription subunit 30 (med30).